The chain runs to 584 residues: 2-succinyl-5-enolpyruvyl-6-hydroxy-3-cyclohexene-1-carboxylate synthase (584 aa).

The protein belongs to the TPP enzyme family. MenD subfamily. As to quaternary structure, homodimer. The cofactor is Mg(2+). Requires Mn(2+) as cofactor. It depends on thiamine diphosphate as a cofactor.

The enzyme catalyses isochorismate + 2-oxoglutarate + H(+) = 5-enolpyruvoyl-6-hydroxy-2-succinyl-cyclohex-3-ene-1-carboxylate + CO2. It participates in quinol/quinone metabolism; 1,4-dihydroxy-2-naphthoate biosynthesis; 1,4-dihydroxy-2-naphthoate from chorismate: step 2/7. The protein operates within quinol/quinone metabolism; menaquinone biosynthesis. Catalyzes the thiamine diphosphate-dependent decarboxylation of 2-oxoglutarate and the subsequent addition of the resulting succinic semialdehyde-thiamine pyrophosphate anion to isochorismate to yield 2-succinyl-5-enolpyruvyl-6-hydroxy-3-cyclohexene-1-carboxylate (SEPHCHC). This chain is 2-succinyl-5-enolpyruvyl-6-hydroxy-3-cyclohexene-1-carboxylate synthase, found in Bacillus cereus (strain ATCC 14579 / DSM 31 / CCUG 7414 / JCM 2152 / NBRC 15305 / NCIMB 9373 / NCTC 2599 / NRRL B-3711).